The primary structure comprises 449 residues: Naphthalene 1,2-dioxygenase system, large oxygenase component (449 aa).

The Rieske domain maps to 39 to 137 (WLFLTHDSLI…LDKKCMGLKE (99 aa)). [2Fe-2S] cluster is bound by residues C81, H83, C101, and H104. Fe cation is bound by residues H208, H213, and D362.

Belongs to the bacterial ring-hydroxylating dioxygenase alpha subunit family. The naphthalene dioxygenase (NDO) multicomponent enzyme system is composed of an electron transfer component and a dioxygenase component (iron sulfur protein (ISP)). The electron transfer component is composed of a ferredoxin reductase (NdoR) and a ferredoxin (NdoA), and the dioxygenase component is formed of a heterohexamer (trimer of heterodimers) of three large alpha subunits (NdoB) and three small beta subunits (NdoC). It depends on [2Fe-2S] cluster as a cofactor. Fe(2+) serves as cofactor.

It carries out the reaction naphthalene + NADH + O2 + H(+) = (1R,2S)-1,2-dihydronaphthalene-1,2-diol + NAD(+). The protein operates within aromatic compound metabolism; naphthalene degradation. Functionally, component of the naphthalene dioxygenase (NDO) multicomponent enzyme system which catalyzes the incorporation of both atoms of molecular oxygen into naphthalene to form cis-(1R,2S)-dihydroxy-1,2-dihydronaphthalene. The alpha subunit has a catalytic role in the holoenzyme. This Pseudomonas aeruginosa protein is Naphthalene 1,2-dioxygenase system, large oxygenase component.